A 182-amino-acid polypeptide reads, in one-letter code: MQVVYNFSQPGLQWKQSDHLRSLMTVTSRDWLLDRGSLTRRLRVLSDDDLEVVPLREEVGVILPHEADVLGLQLGAIGGVREVYLVGFGRPWVFARSIIVNSGSIEEGSALLQLGNMPLGDLLFGDGSFQRSEIEVCRYHDACNASARSTYPLWARRSVFKREKMHVLVQEMFLPALWEEMS.

Residues Arg-81, Leu-119, and Glu-171 each coordinate substrate.

This sequence belongs to the UbiC family.

It is found in the cytoplasm. The enzyme catalyses chorismate = 4-hydroxybenzoate + pyruvate. The protein operates within cofactor biosynthesis; ubiquinone biosynthesis. Its function is as follows. Removes the pyruvyl group from chorismate, with concomitant aromatization of the ring, to provide 4-hydroxybenzoate (4HB) for the ubiquinone pathway. In Pseudomonas putida (Arthrobacter siderocapsulatus), this protein is Probable chorismate pyruvate-lyase.